A 176-amino-acid chain; its full sequence is Disulfide bond formation protein B (176 aa).

The Cytoplasmic segment spans residues 1–14 (MLRFLNQCSQGRGA). The chain crosses the membrane as a helical span at residues 15–31 (WLLMAFTALALELTALW). Residues 32 to 49 (FQHVMLLKPCVLCIYERC) lie on the Periplasmic side of the membrane. Cys41 and Cys44 are joined by a disulfide. The chain crosses the membrane as a helical span at residues 50-65 (ALFGVLGAALIGAIAP). Topologically, residues 66 to 71 (KTPLRY) are cytoplasmic. A helical membrane pass occupies residues 72 to 89 (VAMVIWLYSAFRGVQLTY). Over 90-144 (EHTMLQLYPSPFATCDFMVRFPEWLPLDKWVPQVFVASGDCAERQWDFLGLEMPQ) the chain is Periplasmic. Cys104 and Cys130 are joined by a disulfide. The helical transmembrane segment at 145–163 (WLLGIFIAYLIVAVLVMIS) threads the bilayer. The Cytoplasmic segment spans residues 164-176 (QPFKAKKRDLFGR).

Belongs to the DsbB family.

It is found in the cell inner membrane. Required for disulfide bond formation in some periplasmic proteins. Acts by oxidizing the DsbA protein. In Shigella sonnei (strain Ss046), this protein is Disulfide bond formation protein B.